The chain runs to 366 residues: Growth hormone secretagogue receptor type 1 (366 aa).

Topologically, residues 1-40 (MWNATPSEEPGSNLTRAELGWDAPPGNDSLADELLQLFPA) are extracellular. 2 N-linked (GlcNAc...) asparagine glycosylation sites follow: N13 and N27. A helical membrane pass occupies residues 41–66 (PLLAGVTATCVALFVVGIAGNLLTML). Over 67-72 (VVSRFR) the chain is Cytoplasmic. The chain crosses the membrane as a helical span at residues 73–96 (ELRTTTNLYLSSMAFSDLLIFLCM). The Extracellular portion of the chain corresponds to 97 to 117 (PLDLVRLWQYRPWNFGDLLCK). A disulfide bridge connects residues C116 and C198. A helical membrane pass occupies residues 118 to 139 (LFQFVSESCTYATVLTITALSV). Topologically, residues 140–162 (ERYFAICFPLRAKVVVTKGRVKL) are cytoplasmic. A helical membrane pass occupies residues 163–183 (VILVIWALAFCSAGPIFVLVG). Residues 184–211 (VEHENGTDPQDTNECRATEFAVRSGLLT) are Extracellular-facing. N-linked (GlcNAc...) asparagine glycosylation occurs at N188. The chain crosses the membrane as a helical span at residues 212-235 (IMVWVSSVFFFLPVFCLTVLYSLI). At 236–263 (GRKLWRRKRGDGAVGSSLRDQNHRQTVK) the chain is on the cytoplasmic side. Residues 264–285 (MLAVVVFAFILCWLPFHVGRYL) form a helical membrane-spanning segment. Residues 286-302 (FSKSFEPGSLEIAQISQ) lie on the Extracellular side of the membrane. Residues 303–326 (YCNLVSFVLFYLSAAINPILYNIM) traverse the membrane as a helical segment. Over 327 to 366 (SKKYRVAVFKLLGFEPFSQRKLSTLKDESSRAWTKSSINT) the chain is Cytoplasmic.

The protein belongs to the G-protein coupled receptor 1 family.

The protein resides in the cell membrane. Its function is as follows. Receptor for ghrelin, coupled to G-alpha-11 proteins. Stimulates growth hormone secretion. Also binds other growth hormone releasing peptides (GHRP) (e.g. Met-enkephalin and GHRP-6) as well as non-peptide, low molecular weight secretagogues (e.g. L-692,429, MK-0677, adenosine). This Oryctolagus cuniculus (Rabbit) protein is Growth hormone secretagogue receptor type 1 (GHSR).